Reading from the N-terminus, the 1087-residue chain is Exportin-7 (1087 aa).

Residues 30 to 96 (AEKALVEFTN…RNYVLNYLAT (67 aa)) enclose the Importin N-terminal domain.

Belongs to the exportin family.

It localises to the cytoplasm. The protein localises to the nucleus. Its function is as follows. Mediates the nuclear export of proteins (cargos) with broad substrate specificity. This chain is Exportin-7 (XPO7), found in Gallus gallus (Chicken).